The chain runs to 197 residues: Imidazoleglycerol-phosphate dehydratase (197 aa).

The protein belongs to the imidazoleglycerol-phosphate dehydratase family.

The protein localises to the cytoplasm. The enzyme catalyses D-erythro-1-(imidazol-4-yl)glycerol 3-phosphate = 3-(imidazol-4-yl)-2-oxopropyl phosphate + H2O. The protein operates within amino-acid biosynthesis; L-histidine biosynthesis; L-histidine from 5-phospho-alpha-D-ribose 1-diphosphate: step 6/9. This chain is Imidazoleglycerol-phosphate dehydratase, found in Pseudomonas putida (strain GB-1).